We begin with the raw amino-acid sequence, 219 residues long: KP6 killer toxin (219 aa).

The signal sequence occupies residues 1-19 (MLIFSVLMYLGLLLAGASA). A propeptide spanning residues 20 to 27 (LPNGLSPR) is cleaved from the precursor. 4 cysteine pairs are disulfide-bonded: Cys-32-Cys-39, Cys-43-Cys-101, Cys-45-Cys-92, and Cys-62-Cys-78. Asn-98 is a glycosylation site (N-linked (GlcNAc...) asparagine; by host). The propeptide occupies 106–138 (KRTIQDSATDTVDLGAELHRDDPPPTASDIGKR). The interval 120–142 (GAELHRDDPPPTASDIGKRGKRP) is disordered.

In terms of assembly, heterodimer of two small polypeptides that are not covalently linked.

It is found in the secreted. Functionally, this protein is lethal to sensitive cells of the same or related species. The KP6 alpha subunit is known to recognize some cellular receptors before interaction of the complex with KP6 beta, precipitating cell death. The polypeptide is KP6 killer toxin (Ustilago maydis P6 virus (UmV6)).